The primary structure comprises 429 residues: MKNLIIRHARQVVLVCKNGERILKGEALKNIAILEGSVNRGISVVADEFGKIECIGYDDDVEPQYNQCSFASEIDATGMCVLPGLIDGHTHPVWVGDRVHEFAMKLAGASYMDVHKAGGGINFTVEHVHKATEDELYEPLKQRLNRMLQCGTTLVEAKSGYGLNTENEMKMLKVIERAKKELPIEISSTFCGAHAIPRGSTAKQAADNIINEQIPTLVKAIKAGELDVENIDVFCEKGVFEVEETRVILQAGKDAGLAINFHGDELHPIKGAELGAELGARAISHLEEISEEGIKAMSKSSVIGVLLPTTAYILRLKPPPARAMIDAGVAIALGTDFNPNAYCLSMPLTMHLACCILRMSMTEALAGATINAAASLGRADTHGSLEVGKFADMVVINAERWEHLIYQIGGHDDIIQHVVKHGKVVFSKR.

Positions 161 and 194 each coordinate 4-imidazolone-5-propanoate. Y161 is an N-formimidoyl-L-glutamate binding site. Residue H262 participates in Fe(3+) binding. H262 contributes to the Zn(2+) binding site. A 4-imidazolone-5-propanoate-binding site is contributed by E265. D336 lines the Fe(3+) pocket. D336 contacts Zn(2+). N338 is a binding site for N-formimidoyl-L-glutamate.

This sequence belongs to the metallo-dependent hydrolases superfamily. HutI family. The cofactor is Zn(2+). Fe(3+) serves as cofactor.

The catalysed reaction is 4-imidazolone-5-propanoate + H2O = N-formimidoyl-L-glutamate. The protein operates within amino-acid degradation; L-histidine degradation into L-glutamate; N-formimidoyl-L-glutamate from L-histidine: step 3/3. In Nematostella vectensis (Starlet sea anemone), this protein is Probable imidazolonepropionase (amdhd1).